The following is a 41-amino-acid chain: Cytochrome b559 subunit beta (41 aa).

Residues 16–32 (WLAVHALAVPTVFFLGA) form a helical membrane-spanning segment. Residue His20 participates in heme binding.

The protein belongs to the PsbE/PsbF family. Heterodimer of an alpha subunit and a beta subunit. PSII is composed of 1 copy each of membrane proteins PsbA, PsbB, PsbC, PsbD, PsbE, PsbF, PsbH, PsbI, PsbJ, PsbK, PsbL, PsbM, PsbT, PsbX, PsbY, PsbZ, Psb30/Ycf12, at least 3 peripheral proteins of the oxygen-evolving complex and a large number of cofactors. It forms dimeric complexes. Heme b is required as a cofactor.

It is found in the plastid. Its subcellular location is the chloroplast thylakoid membrane. In terms of biological role, this b-type cytochrome is tightly associated with the reaction center of photosystem II (PSII). PSII is a light-driven water:plastoquinone oxidoreductase that uses light energy to abstract electrons from H(2)O, generating O(2) and a proton gradient subsequently used for ATP formation. It consists of a core antenna complex that captures photons, and an electron transfer chain that converts photonic excitation into a charge separation. The polypeptide is Cytochrome b559 subunit beta (Chlorella vulgaris (Green alga)).